Consider the following 102-residue polypeptide: Large ribosomal subunit protein uL24 (102 aa).

The protein belongs to the universal ribosomal protein uL24 family. As to quaternary structure, part of the 50S ribosomal subunit.

Functionally, one of two assembly initiator proteins, it binds directly to the 5'-end of the 23S rRNA, where it nucleates assembly of the 50S subunit. Its function is as follows. One of the proteins that surrounds the polypeptide exit tunnel on the outside of the subunit. This Herpetosiphon aurantiacus (strain ATCC 23779 / DSM 785 / 114-95) protein is Large ribosomal subunit protein uL24.